The chain runs to 238 residues: Leucine-rich repeat-containing protein 57 (238 aa).

LRR repeat units follow at residues 39 to 60 (NLRT…MGKF), 62 to 84 (LLKS…CKLK), 85 to 106 (KLET…FVQL), 108 to 129 (ALKT…LFKL), 131 to 152 (NLDV…VSGL), 153 to 175 (QAIE…SHCP), 176 to 196 (RLKV…PPSI), and 201 to 221 (QISL…RDLE).

The chain is Leucine-rich repeat-containing protein 57 (lrrc57) from Xenopus laevis (African clawed frog).